The chain runs to 995 residues: Integrator complex subunit 8 (995 aa).

Phosphothreonine is present on Thr18. The short motif at 24–29 (WFEFLL) is the WFEF motif element. 4 TPR repeats span residues 250-288 (CQVC…LAEI), 320-356 (SQQL…TLPV), 570-603 (VYIL…VTEF), and 833-866 (HAWL…CSDF).

It belongs to the Integrator subunit 8 family. Component of the Integrator complex, composed of core subunits INTS1, INTS2, INTS3, INTS4, INTS5, INTS6, INTS7, INTS8, INTS9/RC74, INTS10, INTS11/CPSF3L, INTS12, INTS13, INTS14 and INTS15. The core complex associates with protein phosphatase 2A subunits PPP2CA and PPP2R1A, to form the Integrator-PP2A (INTAC) complex.

Its subcellular location is the nucleus. The protein localises to the chromosome. Its function is as follows. Component of the integrator complex, a multiprotein complex that terminates RNA polymerase II (Pol II) transcription in the promoter-proximal region of genes. The integrator complex provides a quality checkpoint during transcription elongation by driving premature transcription termination of transcripts that are unfavorably configured for transcriptional elongation: the complex terminates transcription by (1) catalyzing dephosphorylation of the C-terminal domain (CTD) of Pol II subunit POLR2A/RPB1 and SUPT5H/SPT5, (2) degrading the exiting nascent RNA transcript via endonuclease activity and (3) promoting the release of Pol II from bound DNA. The integrator complex is also involved in terminating the synthesis of non-coding Pol II transcripts, such as enhancer RNAs (eRNAs), small nuclear RNAs (snRNAs), telomerase RNAs and long non-coding RNAs (lncRNAs). Within the integrator complex, INTS8 is required for the recruitment of protein phosphatase 2A (PP2A) to transcription pause-release checkpoint. The sequence is that of Integrator complex subunit 8 (Ints8) from Mus musculus (Mouse).